Consider the following 81-residue polypeptide: UPF0298 protein SAK_1599 (81 aa).

This sequence belongs to the UPF0298 family.

It is found in the cytoplasm. This chain is UPF0298 protein SAK_1599, found in Streptococcus agalactiae serotype Ia (strain ATCC 27591 / A909 / CDC SS700).